The following is an 87-amino-acid chain: Small ribosomal subunit protein bS20 (87 aa).

It belongs to the bacterial ribosomal protein bS20 family.

Binds directly to 16S ribosomal RNA. In Halothermothrix orenii (strain H 168 / OCM 544 / DSM 9562), this protein is Small ribosomal subunit protein bS20.